Consider the following 351-residue polypeptide: Methionine import ATP-binding protein MetN (351 aa).

Residues 2–247 (ITTSGLTKVY…PGSELAAALF (246 aa)) enclose the ABC transporter domain. 38–45 (GQSGAGKS) serves as a coordination point for ATP.

The protein belongs to the ABC transporter superfamily. Methionine importer (TC 3.A.1.24) family. As to quaternary structure, the complex is composed of two ATP-binding proteins (MetN), two transmembrane proteins (MetI) and a solute-binding protein (MetQ).

It localises to the cell membrane. The catalysed reaction is L-methionine(out) + ATP + H2O = L-methionine(in) + ADP + phosphate + H(+). It carries out the reaction D-methionine(out) + ATP + H2O = D-methionine(in) + ADP + phosphate + H(+). Part of the ABC transporter complex MetNIQ involved in methionine import. Responsible for energy coupling to the transport system. The protein is Methionine import ATP-binding protein MetN of Streptomyces coelicolor (strain ATCC BAA-471 / A3(2) / M145).